The primary structure comprises 33 residues: uncharacterized protein (33 aa).

Residues 11-31 (LALVIYMSVVLLLMVGVPLLF) traverse the membrane as a helical segment.

The protein resides in the membrane. This is an uncharacterized protein from Saccharomyces cerevisiae (strain ATCC 204508 / S288c) (Baker's yeast).